The primary structure comprises 77 residues: Large ribosomal subunit protein uL24 (77 aa).

It belongs to the universal ribosomal protein uL24 family. Part of the 50S ribosomal subunit.

Functionally, one of two assembly initiator proteins, it binds directly to the 5'-end of the 23S rRNA, where it nucleates assembly of the 50S subunit. In terms of biological role, one of the proteins that surrounds the polypeptide exit tunnel on the outside of the subunit. The chain is Large ribosomal subunit protein uL24 from Campylobacter jejuni subsp. jejuni serotype O:6 (strain 81116 / NCTC 11828).